The sequence spans 205 residues: Golgi to ER traffic protein 1 (205 aa).

Residues 1–9 (MFELQPSSI) are Lumenal-facing. Residues 10-29 (VVLVFCVLAIKVCISLIGKT) form a helical membrane-spanning segment. Residues 30–116 (TIQDRIWYLY…QISKLVNLAI (87 aa)) are Cytoplasmic-facing. The stretch at 53–103 (ALAQKREELVRVNKERRAISAQDEYAKWTKLNRQFDKLNSEVNDLAEATSS) forms a coiled coil. A helical membrane pass occupies residues 117–137 (AATTTAPIWFSRIWYRKVVLF). Topologically, residues 138–161 (YLPPKVFPYYIEWVLALPFIVTGG) are lumenal. Residues 162–178 (VGLTVWMFALNSVLSSL) form a helical membrane-spanning segment. At 179–205 (EFLIKFYLEEPVKKPEAPAASEAQTKQ) the chain is on the cytoplasmic side.

Belongs to the WRB/GET1 family. Component of the Golgi to ER traffic (GET) complex, which is composed of GET1, GET2 and GET3. Within the complex, GET1 and GET2 form a heterotetramer which is stabilized by phosphatidylinositol binding and which binds to the GET3 homodimer.

The protein resides in the endoplasmic reticulum membrane. Its subcellular location is the golgi apparatus membrane. Functionally, required for the post-translational delivery of tail-anchored (TA) proteins to the endoplasmic reticulum. Together with GET2, acts as a membrane receptor for soluble GET3, which recognizes and selectively binds the transmembrane domain of TA proteins in the cytosol. The GET complex cooperates with the HDEL receptor ERD2 to mediate the ATP-dependent retrieval of resident ER proteins that contain a C-terminal H-D-E-L retention signal from the Golgi to the ER. This chain is Golgi to ER traffic protein 1, found in Clavispora lusitaniae (strain ATCC 42720) (Yeast).